The following is a 963-amino-acid chain: Iron-responsive element-binding protein 2 (963 aa).

[4Fe-4S] cluster is bound by residues Cys-512, Cys-578, and Cys-581.

It belongs to the aconitase/IPM isomerase family. In terms of assembly, interacts with RBCK1 only in iron-rich conditions. Interacts (when associated with the 4Fe-4S) with FBXL5. Interacts with CIAO1 and CIAO2A. Requires [4Fe-4S] cluster as cofactor. Post-translationally, ubiquitinated and degraded by the proteasome in presence of high level of iron and oxygen. Ubiquitinated by a SCF complex containing FBXL5. Upon iron and oxygen depletion FBXL5 is degraded, preventing ubiquitination and allowing its RNA-binding activity.

The protein resides in the cytoplasm. RNA-binding protein that binds to iron-responsive elements (IRES), which are stem-loop structures found in the 5'-UTR of ferritin, and delta aminolevulinic acid synthase mRNAs, and in the 3'-UTR of transferrin receptor mRNA. Binding to the IRE element in ferritin results in the repression of its mRNA translation. Binding of the protein to the transferrin receptor mRNA inhibits the degradation of this otherwise rapidly degraded mRNA. This chain is Iron-responsive element-binding protein 2 (Ireb2), found in Mus musculus (Mouse).